The primary structure comprises 436 residues: ATP-dependent 6-phosphofructokinase (436 aa).

ATP is bound by residues glycine 90, arginine 155–glycine 156, and glycine 180–threonine 183. Aspartate 181 lines the Mg(2+) pocket. Residues threonine 209–aspartate 211, methionine 254–arginine 256, glutamate 307, and tyrosine 362–arginine 365 contribute to the substrate site. Residue aspartate 211 is the Proton acceptor of the active site.

Belongs to the phosphofructokinase type A (PFKA) family. PPi-dependent PFK group II subfamily. Atypical ATP-dependent clade 'X' sub-subfamily. In terms of assembly, homodimer. Aggregates to a homotetramer after activation by ATP. Requires Mg(2+) as cofactor.

It localises to the cytoplasm. The catalysed reaction is beta-D-fructose 6-phosphate + ATP = beta-D-fructose 1,6-bisphosphate + ADP + H(+). The protein operates within carbohydrate degradation; glycolysis; D-glyceraldehyde 3-phosphate and glycerone phosphate from D-glucose: step 3/4. Activated by nucleoside triphosphates. Inhibited by phosphoenolpyruvate. EDTA and biphosphonates play the role of inhibitors of kinase activity. Catalyzes the phosphorylation of D-fructose 6-phosphate to fructose 1,6-bisphosphate by ATP, the first committing step of glycolysis. In Entamoeba histolytica (strain ATCC 30459 / HM-1:IMSS / ABRM), this protein is ATP-dependent 6-phosphofructokinase (PPi-PFK).